A 461-amino-acid chain; its full sequence is Alcaligin biosynthesis enzyme (461 aa).

Position 9-15 (9-15 (VAIGIGP)) interacts with FAD.

Belongs to the lysine N(6)-hydroxylase/L-ornithine N(5)-oxygenase family. The cofactor is FAD.

The protein operates within siderophore biosynthesis; alcaligin biosynthesis. The protein is Alcaligin biosynthesis enzyme (alcA) of Bordetella parapertussis (strain 12822 / ATCC BAA-587 / NCTC 13253).